The primary structure comprises 528 residues: Phosphoenolpyruvate carboxykinase (ATP) (528 aa).

R56, Y192, and K198 together coordinate substrate. Residues K198, H217, and 233 to 241 (GLSGTGKTT) each bind ATP. Residues K198 and H217 each coordinate Mn(2+). D254 is a binding site for Mn(2+). ATP contacts are provided by E282, R319, and T444. Residue R319 participates in substrate binding.

Belongs to the phosphoenolpyruvate carboxykinase (ATP) family. Mn(2+) is required as a cofactor.

The protein localises to the cytoplasm. It catalyses the reaction oxaloacetate + ATP = phosphoenolpyruvate + ADP + CO2. It functions in the pathway carbohydrate biosynthesis; gluconeogenesis. Involved in the gluconeogenesis. Catalyzes the conversion of oxaloacetate (OAA) to phosphoenolpyruvate (PEP) through direct phosphoryl transfer between the nucleoside triphosphate and OAA. In Bacillus mycoides (strain KBAB4) (Bacillus weihenstephanensis), this protein is Phosphoenolpyruvate carboxykinase (ATP).